Consider the following 808-residue polypeptide: Phospholipase D alpha 1 (808 aa).

The 125-residue stretch at 1-125 (MAQILLHGTL…LEGEEIDKWV (125 aa)) folds into the C2 domain. Asp-186 is a binding site for Ca(2+). The 39-residue stretch at 326–364 (TMFTHHQKIVVVDSELPSGESEKRRILSFVGGIDLCDGR) folds into the PLD phosphodiesterase 1 domain. Active-site residues include His-331, Lys-333, and Asp-338. His-331 is a binding site for a 1,2-diacyl-sn-glycero-3-phosphate. Ca(2+) contacts are provided by His-370 and His-404. Residues Gln-520 and His-659 each coordinate a 1,2-diacyl-sn-glycero-3-phosphate. The 28-residue stretch at 654–681 (FMIYVHSKMMIVDDEYIIVGSANINQRS) folds into the PLD phosphodiesterase 2 domain. Residues His-659, Lys-661, and Asp-666 contribute to the active site. Glu-720 provides a ligand contact to Ca(2+).

The protein belongs to the phospholipase D family. C2-PLD subfamily. The cofactor is Ca(2+).

The catalysed reaction is a 1,2-diacyl-sn-glycero-3-phosphocholine + H2O = a 1,2-diacyl-sn-glycero-3-phosphate + choline + H(+). Functionally, hydrolyzes glycerol-phospholipids at the terminal phosphodiesteric bond. Plays an important role in various cellular processes. In Nicotiana tabacum (Common tobacco), this protein is Phospholipase D alpha 1 (PLD1).